The sequence spans 269 residues: UPF0354 protein YtpQ (269 aa).

The protein belongs to the UPF0354 family.

This Bacillus subtilis (strain 168) protein is UPF0354 protein YtpQ (ytpQ).